The chain runs to 476 residues: 3-isopropylmalate dehydratase large subunit (476 aa).

Residues C353, C413, and C416 each coordinate [4Fe-4S] cluster.

This sequence belongs to the aconitase/IPM isomerase family. LeuC type 1 subfamily. As to quaternary structure, heterodimer of LeuC and LeuD. The cofactor is [4Fe-4S] cluster.

The catalysed reaction is (2R,3S)-3-isopropylmalate = (2S)-2-isopropylmalate. Its pathway is amino-acid biosynthesis; L-leucine biosynthesis; L-leucine from 3-methyl-2-oxobutanoate: step 2/4. Catalyzes the isomerization between 2-isopropylmalate and 3-isopropylmalate, via the formation of 2-isopropylmaleate. The chain is 3-isopropylmalate dehydratase large subunit from Yersinia enterocolitica serotype O:8 / biotype 1B (strain NCTC 13174 / 8081).